The sequence spans 155 residues: MSRRGTAEEKTAKSDPIYRNRLVNMLVNRILKHGKKSLAYQIIYRAVKKIQQKTETNPLSVLRQAIRGVTPDIAVKARRVGGSTHQVPIEIGSTQGKALAIRWLLGASRKRPGRNMALKLSSELVDAAKGSGDAIRKKEETHRMAEANRAFAHFR.

This sequence belongs to the universal ribosomal protein uS7 family. In terms of assembly, part of the 30S ribosomal subunit.

The protein localises to the plastid. The protein resides in the chloroplast. Its function is as follows. One of the primary rRNA binding proteins, it binds directly to 16S rRNA where it nucleates assembly of the head domain of the 30S subunit. This Saruma henryi (Upright wild ginger) protein is Small ribosomal subunit protein uS7c (rps7).